A 551-amino-acid chain; its full sequence is Probable aldehyde dehydrogenase (551 aa).

278-283 (GSSRVA) is a binding site for NAD(+). Glu-297 functions as the Proton acceptor in the catalytic mechanism. Cys-332 serves as the catalytic Nucleophile.

It belongs to the aldehyde dehydrogenase family. In terms of tissue distribution, in uninfected plants, highest levels found in stems. In plants infected with the flax rust, highest levels in leaves. Higher levels of expression in infected leaves than uninfected stems.

The enzyme catalyses an aldehyde + NAD(+) + H2O = a carboxylate + NADH + 2 H(+). Functionally, could be involved in facilitating the biotrophic relationship between the plant and the rust fungus. In Linum usitatissimum (Flax), this protein is Probable aldehyde dehydrogenase (FIS1).